Reading from the N-terminus, the 55-residue chain is ATP synthase F(0) complex subunit 8 (55 aa).

A helical transmembrane segment spans residues 7–24 (NPWFFIMLLSWLTFSLII). Residues 35 to 55 (NPPSNKTTTHTKTTPWTWPWT) form a disordered region. The span at 37–55 (PSNKTTTHTKTTPWTWPWT) shows a compositional bias: low complexity.

This sequence belongs to the ATPase protein 8 family. Component of the ATP synthase complex composed at least of ATP5F1A/subunit alpha, ATP5F1B/subunit beta, ATP5MC1/subunit c (homooctomer), MT-ATP6/subunit a, MT-ATP8/subunit 8, ATP5ME/subunit e, ATP5MF/subunit f, ATP5MG/subunit g, ATP5MK/subunit k, ATP5MJ/subunit j, ATP5F1C/subunit gamma, ATP5F1D/subunit delta, ATP5F1E/subunit epsilon, ATP5PF/subunit F6, ATP5PB/subunit b, ATP5PD/subunit d, ATP5PO/subunit OSCP. ATP synthase complex consists of a soluble F(1) head domain (subunits alpha(3) and beta(3)) - the catalytic core - and a membrane F(0) domain - the membrane proton channel (subunits c, a, 8, e, f, g, k and j). These two domains are linked by a central stalk (subunits gamma, delta, and epsilon) rotating inside the F1 region and a stationary peripheral stalk (subunits F6, b, d, and OSCP).

The protein localises to the mitochondrion membrane. Functionally, subunit 8, of the mitochondrial membrane ATP synthase complex (F(1)F(0) ATP synthase or Complex V) that produces ATP from ADP in the presence of a proton gradient across the membrane which is generated by electron transport complexes of the respiratory chain. ATP synthase complex consist of a soluble F(1) head domain - the catalytic core - and a membrane F(1) domain - the membrane proton channel. These two domains are linked by a central stalk rotating inside the F(1) region and a stationary peripheral stalk. During catalysis, ATP synthesis in the catalytic domain of F(1) is coupled via a rotary mechanism of the central stalk subunits to proton translocation. In vivo, can only synthesize ATP although its ATP hydrolase activity can be activated artificially in vitro. Part of the complex F(0) domain. The chain is ATP synthase F(0) complex subunit 8 from Chaetura pelagica (Chimney swift).